A 684-amino-acid polypeptide reads, in one-letter code: Cyclic nucleotide-gated channel alpha-1 (684 aa).

Residues 1-161 lie on the Cytoplasmic side of the membrane; it reads MKTNIINTWH…PSGNTYYNWL (161 aa). Positions 34-145 are disordered; sequence ACSSFSDDDN…TKEKKEEEKK (112 aa). A compositionally biased stretch (acidic residues) spans 39 to 54; that stretch reads SDDDNGSLSEESENED. Over residues 105–145 the composition is skewed to basic and acidic residues; it reads SKADDKNENKKDPEKKKKKEKEKEKKKKEEKTKEKKEEEKK. The chain crosses the membrane as a helical span at residues 162 to 183; sequence FCITLPVMYNWTMIIARACFDE. The Extracellular portion of the chain corresponds to 184 to 193; it reads LQSDYLEYWL. A helical transmembrane segment spans residues 194-214; it reads IFDYVSDVVYLADMFVRTRTG. The Cytoplasmic segment spans residues 215–239; that stretch reads YLEQGLLVKDRMKLIEKYKANLQFK. A helical membrane pass occupies residues 240 to 258; that stretch reads LDVLSVIPTDLLYIKFGWN. At 259 to 263 the chain is on the extracellular side; sequence YPEIR. A helical membrane pass occupies residues 264-282; that stretch reads LNRLLRISRMFEFFQRTET. The Cytoplasmic segment spans residues 283–289; that stretch reads RTNYPNI. Residues 287–395 are ion conduction pathway; that stretch reads PNIFRISNLV…GNIGSMISNM (109 aa). Residues 290–313 form a helical membrane-spanning segment; the sequence is FRISNLVMYIVIIIHWNACVYYSI. Topologically, residues 314–336 are extracellular; the sequence is SKAIGFGNDTWVYPDVNDPEFGR. The N-linked (GlcNAc...) asparagine glycan is linked to asparagine 321. Transmembrane regions (helical) follow at residues 337-371 and 372-396; these read LARK…IFVV and VDFL…SNMN. The tract at residues 354-357 is selectivity filter; it reads TIGE. Residues 397–473 are C-linker; that stretch reads AARAEFQSRV…DTLKKVRIFA (77 aa). Topologically, residues 397–684 are cytoplasmic; the sequence is AARAEFQSRV…ESELTESLQD (288 aa). The cyclic nucleotide-binding domain stretch occupies residues 477 to 597; that stretch reads AGLLVELVLK…EEKGRQILMK (121 aa). The 3',5'-cyclic GMP site is built by glycine 537, serine 540, arginine 553, and threonine 554. Positions 553 and 554 each coordinate 3',5'-cyclic AMP. Residues 615–669 adopt a coiled-coil conformation; sequence LEEKVTRMEGSVDLLQTRFARILAEYESMQQKLKQRLTKVEKFLKPLIETEFSAL.

The protein belongs to the cyclic nucleotide-gated cation channel (TC 1.A.1.5) family. CNGA1 subfamily. As to quaternary structure, forms heterotetrameric channels composed of CNGA1 and CNGB1 subunits with 3:1 stoichiometry. May also form cyclic nucleotide-activated homotetrameric channels, that are efficiently activated by saturating cGMP, but poorly activated by saturating cAMP compared to the heterotetramer with CNGB1. The channel binds Ca(2+)-bound CALM1 via CaM1 and CaM2 regions of the CNGB1 subunit; this interaction modulates the affinity of the channel for cNMPs in response to intracellular Ca(2+) levels. As to expression, rod cells in the retina and inner medulla of kidney.

It is found in the cell membrane. The catalysed reaction is Ca(2+)(in) = Ca(2+)(out). The enzyme catalyses Na(+)(in) = Na(+)(out). It catalyses the reaction K(+)(in) = K(+)(out). It carries out the reaction NH4(+)(in) = NH4(+)(out). The catalysed reaction is Rb(+)(in) = Rb(+)(out). The enzyme catalyses Li(+)(in) = Li(+)(out). It catalyses the reaction Cs(+)(in) = Cs(+)(out). Its function is as follows. Pore-forming subunit of the rod cyclic nucleotide-gated channel. Mediates rod photoresponses at dim light converting transient changes in intracellular cGMP levels into electrical signals. In the dark, cGMP levels are high and keep the channel open enabling a steady inward current carried by Na(+) and Ca(2+) ions that leads to membrane depolarization and neurotransmitter release from synaptic terminals. Upon photon absorption cGMP levels decline leading to channel closure and membrane hyperpolarization that ultimately slows neurotransmitter release and signals the presence of light, the end point of the phototransduction cascade. Conducts cGMP- and cAMP-gated ion currents, with permeability for monovalent and divalent cations. The selectivity for Ca(2+) over Na(+) increases with cGMP concentrations, whereas the selectivity among monovalent ions is independent of the cGMP levels. The protein is Cyclic nucleotide-gated channel alpha-1 (Cnga1) of Mus musculus (Mouse).